We begin with the raw amino-acid sequence, 362 residues long: Chorismate synthase (362 aa).

Positions 48 and 54 each coordinate NADP(+). FMN is bound by residues 125–127 (RSS), 238–239 (NA), G278, 293–297 (KPTSS), and R319.

This sequence belongs to the chorismate synthase family. In terms of assembly, homotetramer. The cofactor is FMNH2.

It carries out the reaction 5-O-(1-carboxyvinyl)-3-phosphoshikimate = chorismate + phosphate. It participates in metabolic intermediate biosynthesis; chorismate biosynthesis; chorismate from D-erythrose 4-phosphate and phosphoenolpyruvate: step 7/7. In terms of biological role, catalyzes the anti-1,4-elimination of the C-3 phosphate and the C-6 proR hydrogen from 5-enolpyruvylshikimate-3-phosphate (EPSP) to yield chorismate, which is the branch point compound that serves as the starting substrate for the three terminal pathways of aromatic amino acid biosynthesis. This reaction introduces a second double bond into the aromatic ring system. The protein is Chorismate synthase of Psychromonas ingrahamii (strain DSM 17664 / CCUG 51855 / 37).